Reading from the N-terminus, the 1752-residue chain is Gag-Pol polyprotein (1752 aa).

Gly-2 carries the N-myristoyl glycine; by host lipid modification. The stretch at Ala-154–Leu-185 forms a coiled coil. Residues Arg-168 to Arg-178 show a composition bias toward basic and acidic residues. Positions Arg-168–Val-222 are disordered. A compositionally biased stretch (polar residues) spans Ala-201–Asn-217. The segment at Asn-501 to Asn-518 adopts a CCHC-type zinc-finger fold. The Peptidase A2 domain maps to Ile-618–Thr-694. The active-site Protease; shared with dimeric partner is Asp-623. The 185-residue stretch at Glu-793 to Leu-977 folds into the Reverse transcriptase domain. Mg(2+) is bound by residues Asp-861, Asp-928, Asp-929, Asp-1231, Glu-1269, Asp-1290, Asp-1360, Asp-1493, and Asp-1550. The region spanning Pro-1222–Phe-1368 is the RNase H type-1 domain. In terms of domain architecture, Integrase catalytic spans Leu-1482–Pro-1638.

Homohexamer. Further associates as homomultimer. The virus core is composed of a lattice formed from hexagonal rings, each containing six capsid monomers. The protease is a homodimer, whose active site consists of two apposed aspartic acid residues. The reverse transcriptase is a monomer. Requires Mg(2+) as cofactor. Specific enzymatic cleavages by the viral protease yield mature proteins. The protease is released by autocatalytic cleavage. The polyprotein is cleaved during and after budding, this process is termed maturation.

The protein resides in the host cell membrane. Its subcellular location is the virion. It carries out the reaction DNA(n) + a 2'-deoxyribonucleoside 5'-triphosphate = DNA(n+1) + diphosphate. The enzyme catalyses Endonucleolytic cleavage to 5'-phosphomonoester.. Functionally, targets Gag and gag-pol polyproteins to the plasma membrane via a multipartite membrane binding signal, that includes its myristoylated N-terminus. Also mediates nuclear localization of the pre-integration complex. Capsid protein p25 forms the spherical core of the virion that encapsulates the genomic RNA-nucleocapsid complex. In terms of biological role, involved in the packaging and encapsidation of two copies of the genome. Binds with high affinity to conserved UCUG elements within the packaging signal, located near the 5'-end of the genome. This binding is dependent on genome dimerization. Its function is as follows. Mediates proteolytic cleavages of Gag and Gag-Pol polyproteins during or shortly after the release of the virion from the plasma membrane. Cleavages take place as an ordered, step-wise cascade to yield mature proteins. This process is called maturation. Displays maximal activity during the budding process just prior to particle release from the cell. Functionally, is a multifunctional enzyme that converts the viral dimeric RNA genome into dsDNA in the cytoplasm, shortly after virus entry into the cell. This enzyme displays a DNA polymerase activity that can copy either DNA or RNA templates, and a ribonuclease H (RNase H) activity that cleaves the RNA strand of RNA-DNA heteroduplexes in a partially processive 3' to 5' endonucleasic mode. Conversion of viral genomic RNA into dsDNA requires many steps. A tRNA binds to the primer-binding site (PBS) situated at the 5' end of the viral RNA. RT uses the 3' end of the tRNA primer to perform a short round of RNA-dependent minus-strand DNA synthesis. The reading proceeds through the U5 region and ends after the repeated (R) region which is present at both ends of viral RNA. The portion of the RNA-DNA heteroduplex is digested by the RNase H, resulting in a ssDNA product attached to the tRNA primer. This ssDNA/tRNA hybridizes with the identical R region situated at the 3' end of viral RNA. This template exchange, known as minus-strand DNA strong stop transfer, can be either intra- or intermolecular. RT uses the 3' end of this newly synthesized short ssDNA to perform the RNA-dependent minus-strand DNA synthesis of the whole template. RNase H digests the RNA template except for a polypurine tract (PPT) situated at the 5' end of the genome. It is not clear if both polymerase and RNase H activities are simultaneous. RNase H probably can proceed both in a polymerase-dependent (RNA cut into small fragments by the same RT performing DNA synthesis) and a polymerase-independent mode (cleavage of remaining RNA fragments by free RTs). Secondly, RT performs DNA-directed plus-strand DNA synthesis using the PPT that has not been removed by RNase H as primers. PPT and tRNA primers are then removed by RNase H. The 3' and 5' ssDNA PBS regions hybridize to form a circular dsDNA intermediate. Strand displacement synthesis by RT to the PBS and PPT ends produces a blunt ended, linear dsDNA copy of the viral genome that includes long terminal repeats (LTRs) at both ends. Catalyzes viral DNA integration into the host chromosome, by performing a series of DNA cutting and joining reactions. This enzyme activity takes place after virion entry into a cell and reverse transcription of the RNA genome in dsDNA. The first step in the integration process is 3' processing. This step requires a complex comprising the viral genome, matrix protein and integrase. This complex is called the pre-integration complex (PIC). The integrase protein removes 2 nucleotides from each 3' end of the viral DNA, leaving recessed CA OH's at the 3' ends. In the second step that requires cell division, the PIC enters cell nucleus. In the third step, termed strand transfer, the integrase protein joins the previously processed 3' ends to the 5' ends of strands of target cellular DNA at the site of integration. The last step is viral DNA integration into host chromosome. In terms of biological role, plays a role in budding and is processed by the viral protease during virion maturation outside the cell. This is Gag-Pol polyprotein (gag-pol) from Walleye dermal sarcoma virus (WDSV).